The following is a 183-amino-acid chain: ATP synthase subunit b, chloroplastic (183 aa).

The chain crosses the membrane as a helical span at residues 27-49 (LATNLINLTVVVGVLIFFGKGVL).

It belongs to the ATPase B chain family. In terms of assembly, F-type ATPases have 2 components, F(1) - the catalytic core - and F(0) - the membrane proton channel. F(1) has five subunits: alpha(3), beta(3), gamma(1), delta(1), epsilon(1). F(0) has four main subunits: a(1), b(1), b'(1) and c(10-14). The alpha and beta chains form an alternating ring which encloses part of the gamma chain. F(1) is attached to F(0) by a central stalk formed by the gamma and epsilon chains, while a peripheral stalk is formed by the delta, b and b' chains.

The protein resides in the plastid. It localises to the chloroplast thylakoid membrane. In terms of biological role, f(1)F(0) ATP synthase produces ATP from ADP in the presence of a proton or sodium gradient. F-type ATPases consist of two structural domains, F(1) containing the extramembraneous catalytic core and F(0) containing the membrane proton channel, linked together by a central stalk and a peripheral stalk. During catalysis, ATP synthesis in the catalytic domain of F(1) is coupled via a rotary mechanism of the central stalk subunits to proton translocation. Its function is as follows. Component of the F(0) channel, it forms part of the peripheral stalk, linking F(1) to F(0). The polypeptide is ATP synthase subunit b, chloroplastic (Brachypodium distachyon (Purple false brome)).